A 447-amino-acid chain; its full sequence is MSNLSLDFSDNTFQPLAARMRPENLAQYIGQQHLLAAGKPLPRAIEAGHLHSMILWGPPGTGKTTLAEVIARYANADVERISAVTSGVKEIREAIERARQNRNAGRRTILFVDEVHRFNKSQQDAFLPHIEDGTITFIGATTENPSFELNSALLSRARVYLLKSLSTEDIEQVLTQAMEDKTRGYGGQDIVLPDETRRAIAELVNGDARRALNTLEMMADMAEVDDSGKRVLKPELLTEIAGERSARFDNKGDRFYDLISALHKSVRGSAPDAALYWYARIITAGGDPLYVARRCLAIASEDVGNADPRAMQVAIAAWDCFTRVGPAEGERAIAQAIVYLACAPKSNAVYTAFKAALADARERPDYDVPVHLRNAPTKLMKEMGYGQEYRYAHDEANAYAAGEVYFPPEIAQTRYYFPTNRGLEGKIGEKLAWLAEQDQNSPIKRYR.

57–64 is an ATP binding site; it reads GPPGTGKT.

It belongs to the AAA ATPase family. RarA/MGS1/WRNIP1 subfamily.

Functionally, DNA-dependent ATPase that plays important roles in cellular responses to stalled DNA replication processes. The polypeptide is Replication-associated recombination protein A (rarA) (Escherichia coli O157:H7).